The chain runs to 870 residues: A-kinase anchor protein 2 (870 aa).

Disordered regions lie at residues 14–43 (PGIT…DHHE) and 103–165 (IEKA…SSRD). Residue S122 is modified to Phosphoserine. The segment covering 133–151 (GHSTDQPQDMLGNSLQAPA) has biased composition (polar residues). S152 bears the Phosphoserine mark. Residues 152–161 (SPSSSTSSHC) are compositionally biased toward low complexity. A Glycyl lysine isopeptide (Lys-Gly) (interchain with G-Cter in SUMO1); alternate cross-link involves residue K174. Residue K174 forms a Glycyl lysine isopeptide (Lys-Gly) (interchain with G-Cter in SUMO2); alternate linkage. Residues 213-307 (EEMIELEKER…QQQQLSTSQL (95 aa)) adopt a coiled-coil conformation. Residues 233–324 (KNPGIAAKWW…EHLDSIEHTK (92 aa)) are disordered. A compositionally biased stretch (basic and acidic residues) spans 259–274 (LESHRKYKERKEKRAQ). Over residues 275-302 (QEQLQLQQQQQQQLQQLQQLQQQQQQQL) the composition is skewed to low complexity. The span at 313–324 (AHEHLDSIEHTK) shows a compositional bias: basic and acidic residues. S347 carries the post-translational modification Phosphoserine. A disordered region spans residues 409–436 (ESQSAGAGTGNAATQGKEGPYSEPSKRG). Positions 410–424 (SQSAGAGTGNAATQG) are enriched in low complexity. Phosphoserine is present on residues S472, S476, and S528. The span at 506–543 (FSMDNISDSGASNETPNALQENSLADFSLPQTPQTDNP) shows a compositional bias: polar residues. 2 disordered regions span residues 506–577 (FSMD…DPLE) and 595–688 (QVDK…RPEG). T537 is subject to Phosphothreonine. The segment at 576–589 (LEYQAGLLVQNAIQ) is PKA-RII subunit binding domain. The segment covering 595–608 (QVDKAEVHTSKEGS) has biased composition (basic and acidic residues). Residue S641 is modified to Phosphoserine. The segment covering 644 to 665 (QEKRDVLPKILPGEDKTLREKG) has biased composition (basic and acidic residues). Positions 720-755 (KLRSRKQRTLSMIEEEIRAAQEREEELKRQRQVRQS) form a coiled coil. 4 positions are modified to phosphoserine: S730, S758, S789, and S796. Residues 740–814 (QEREEELKRQ…EAAGAQRPKN (75 aa)) form a disordered region. Positions 755-774 (STPSPRAQNAPSLPSRTTCY) are enriched in polar residues.

It localises to the apical cell membrane. In terms of biological role, binds to regulatory subunit (RII) of protein kinase A. May be involved in establishing polarity in signaling systems or in integrating PKA-RII isoforms with downstream effectors to capture, amplify and focus diffuse, trans-cellular signals carried by cAMP. Binds to and modulates the structure of the actin cytoskeleton. The protein is A-kinase anchor protein 2 of Rattus norvegicus (Rat).